The chain runs to 144 residues: MKKILVSFVAIMAVASSAMAAETMNMHDQVNNAQAPAHQMQSSAEKSAVQGDSMTMMDMSSHDQAAMSHDMMQNGNSAAHQDMAEMHKKMMKSKPAASNETAKSFSEMNEHEKSAVVHEKANNGQSSVIHQQQAEKHRSQITQN.

The signal sequence occupies residues 1 to 20; that stretch reads MKKILVSFVAIMAVASSAMA. Residues 86–144 are disordered; sequence MHKKMMKSKPAASNETAKSFSEMNEHEKSAVVHEKANNGQSSVIHQQQAEKHRSQITQN. Residues 96–107 show a composition bias toward polar residues; the sequence is AASNETAKSFSE. Residues 108 to 121 are compositionally biased toward basic and acidic residues; sequence MNEHEKSAVVHEKA. Residues 122-132 show a composition bias toward polar residues; that stretch reads NNGQSSVIHQQ.

It to S.typhimurium SilE.

Its subcellular location is the periplasm. In terms of biological role, required for the copper-inducible expression of copper resistance. Activated by the two-component regulatory system CusS/CusR. The sequence is that of Probable copper-binding protein PcoE (pcoE) from Escherichia coli.